The following is a 600-amino-acid chain: Proline--tRNA ligase (600 aa).

This sequence belongs to the class-II aminoacyl-tRNA synthetase family. ProS type 1 subfamily. As to quaternary structure, homodimer.

It localises to the cytoplasm. The enzyme catalyses tRNA(Pro) + L-proline + ATP = L-prolyl-tRNA(Pro) + AMP + diphosphate. Its function is as follows. Catalyzes the attachment of proline to tRNA(Pro) in a two-step reaction: proline is first activated by ATP to form Pro-AMP and then transferred to the acceptor end of tRNA(Pro). As ProRS can inadvertently accommodate and process non-cognate amino acids such as alanine and cysteine, to avoid such errors it has two additional distinct editing activities against alanine. One activity is designated as 'pretransfer' editing and involves the tRNA(Pro)-independent hydrolysis of activated Ala-AMP. The other activity is designated 'posttransfer' editing and involves deacylation of mischarged Ala-tRNA(Pro). The misacylated Cys-tRNA(Pro) is not edited by ProRS. This Prochlorococcus marinus (strain MIT 9211) protein is Proline--tRNA ligase.